The chain runs to 564 residues: Potassium-transporting ATPase potassium-binding subunit (564 aa).

The next 10 membrane-spanning stretches (helical) occupy residues 4 to 24 (YDYW…PFLG), 67 to 87 (MLAL…ILLF), 135 to 155 (AGLT…LVAL), 179 to 199 (LYGL…QGVP), 254 to 274 (WANL…VFTF), 286 to 306 (AILG…LWAE), 382 to 402 (AGMY…GLMI), 420 to 440 (LLVV…AIAA), 487 to 507 (LMLG…VLAL), and 528 to 548 (GPLF…LTFL).

It belongs to the KdpA family. As to quaternary structure, the system is composed of three essential subunits: KdpA, KdpB and KdpC.

It localises to the cell inner membrane. In terms of biological role, part of the high-affinity ATP-driven potassium transport (or Kdp) system, which catalyzes the hydrolysis of ATP coupled with the electrogenic transport of potassium into the cytoplasm. This subunit binds the periplasmic potassium ions and delivers the ions to the membrane domain of KdpB through an intramembrane tunnel. The chain is Potassium-transporting ATPase potassium-binding subunit from Pseudomonas fluorescens (strain SBW25).